Here is a 239-residue protein sequence, read N- to C-terminus: Dephospho-CoA kinase (239 aa).

Residues 3–206 (IIGLTGSIAS…GGEGGEPAAG (204 aa)) form the DPCK domain. 11–16 (ASGKST) provides a ligand contact to ATP. Residues 197–239 (GGEGGEPAAGSSAHHGAGSVDPGAGPCDGPGAAPEAERRGGDR) form a disordered region. Residues 204-230 (AAGSSAHHGAGSVDPGAGPCDGPGAAP) are compositionally biased toward low complexity.

It belongs to the CoaE family.

It localises to the cytoplasm. The catalysed reaction is 3'-dephospho-CoA + ATP = ADP + CoA + H(+). It participates in cofactor biosynthesis; coenzyme A biosynthesis; CoA from (R)-pantothenate: step 5/5. Catalyzes the phosphorylation of the 3'-hydroxyl group of dephosphocoenzyme A to form coenzyme A. This is Dephospho-CoA kinase from Symbiobacterium thermophilum (strain DSM 24528 / JCM 14929 / IAM 14863 / T).